We begin with the raw amino-acid sequence, 514 residues long: Carboxysome shell carbonic anhydrase (514 aa).

The disordered stretch occupies residues 1-27 (MAYRNRNLASQTQRPLAPTAPRRRPVV). Cys175 is a binding site for Zn(2+). Asp177 functions as the Proton acceptor in the catalytic mechanism. 2 residues coordinate Zn(2+): His243 and Cys254.

Belongs to the beta-class carbonic anhydrase family. CsoSCA subfamily. As to quaternary structure, homodimer. The cofactor is Zn(2+).

The protein localises to the carboxysome. The enzyme catalyses hydrogencarbonate + H(+) = CO2 + H2O. In terms of biological role, reversible hydration of carbon dioxide. Essential for photosynthetic carbon dioxide fixation, supplies CO(2) to RuBisCO (ribulose bisphosphate carboxylase, cbbL-cbbS) in the carboxysome. This is Carboxysome shell carbonic anhydrase from Prochlorococcus marinus (strain MIT 9313).